A 507-amino-acid chain; its full sequence is GMP synthase [glutamine-hydrolyzing] (507 aa).

The Glutamine amidotransferase type-1 domain maps to 9–202 (TILIIDFGSQ…VHRIVGVKPG (194 aa)). The active-site Nucleophile is Cys86. Residues His176 and Glu178 contribute to the active site. The GMPS ATP-PPase domain maps to 203–395 (WTMGAYREQA…LGLPDSFIGR (193 aa)). 230–236 (SGGVDSS) is an ATP binding site.

In terms of assembly, homodimer.

It catalyses the reaction XMP + L-glutamine + ATP + H2O = GMP + L-glutamate + AMP + diphosphate + 2 H(+). It participates in purine metabolism; GMP biosynthesis; GMP from XMP (L-Gln route): step 1/1. Functionally, catalyzes the synthesis of GMP from XMP. The sequence is that of GMP synthase [glutamine-hydrolyzing] from Brucella melitensis biotype 1 (strain ATCC 23456 / CCUG 17765 / NCTC 10094 / 16M).